Reading from the N-terminus, the 236-residue chain is Phosphoglycolate phosphatase (236 aa).

Residue D23 is the Nucleophile of the active site. Mg(2+)-binding residues include D23 and D25. K162 provides a ligand contact to substrate. Mg(2+) is bound by residues D185 and D189.

Belongs to the archaeal SPP-like hydrolase family. Mg(2+) is required as a cofactor.

It carries out the reaction 2-phosphoglycolate + H2O = glycolate + phosphate. In terms of biological role, catalyzes the dephosphorylation of 2-phosphoglycolate. This chain is Phosphoglycolate phosphatase, found in Picrophilus torridus (strain ATCC 700027 / DSM 9790 / JCM 10055 / NBRC 100828 / KAW 2/3).